The chain runs to 427 residues: Serine--tRNA ligase (427 aa).

Residue 236–238 coordinates L-serine; sequence TAE. 267-269 is an ATP binding site; the sequence is RRE. An L-serine-binding site is contributed by Glu-290. 354-357 is an ATP binding site; it reads EISS. Ser-390 serves as a coordination point for L-serine.

Belongs to the class-II aminoacyl-tRNA synthetase family. Type-1 seryl-tRNA synthetase subfamily. In terms of assembly, homodimer. The tRNA molecule binds across the dimer.

It localises to the cytoplasm. It catalyses the reaction tRNA(Ser) + L-serine + ATP = L-seryl-tRNA(Ser) + AMP + diphosphate + H(+). The catalysed reaction is tRNA(Sec) + L-serine + ATP = L-seryl-tRNA(Sec) + AMP + diphosphate + H(+). It participates in aminoacyl-tRNA biosynthesis; selenocysteinyl-tRNA(Sec) biosynthesis; L-seryl-tRNA(Sec) from L-serine and tRNA(Sec): step 1/1. Catalyzes the attachment of serine to tRNA(Ser). Is also able to aminoacylate tRNA(Sec) with serine, to form the misacylated tRNA L-seryl-tRNA(Sec), which will be further converted into selenocysteinyl-tRNA(Sec). This is Serine--tRNA ligase from Rippkaea orientalis (strain PCC 8801 / RF-1) (Cyanothece sp. (strain PCC 8801)).